The primary structure comprises 720 residues: Protein O-mannosyl-transferase 1 (720 aa).

A run of 8 helical transmembrane segments spans residues 7-27 (PVSV…LALF), 67-87 (FGHM…NFVW), 105-125 (LIPA…VVEL), 127-147 (YSHF…SLIV), 150-170 (RFML…LSYL), 178-198 (SFFK…GIGV), 201-221 (MGMF…WQLI), and 239-259 (FLAL…IHLT). 3 consecutive MIR domains span residues 291–354 (PLDV…IKDP), 365–422 (PKPV…VDIV), and 426–486 (SEKE…VEEH). 4 helical membrane-spanning segments follow: residues 570-590 (IVTW…FLTY), 609-629 (LVLA…PFFL), 633-653 (TLFL…IPIV), and 670-690 (AFGG…HSLS).

Belongs to the glycosyltransferase 39 family. Widely expressed. Has particularly strong expression in testis, ovary, brain, liver and heart.

It is found in the endoplasmic reticulum membrane. It carries out the reaction a di-trans,poly-cis-dolichyl beta-D-mannosyl phosphate + L-seryl-[protein] = 3-O-(alpha-D-mannosyl)-L-seryl-[protein] + a di-trans,poly-cis-dolichyl phosphate + H(+). The catalysed reaction is a di-trans,poly-cis-dolichyl beta-D-mannosyl phosphate + L-threonyl-[protein] = 3-O-(alpha-D-mannosyl)-L-threonyl-[protein] + a di-trans,poly-cis-dolichyl phosphate + H(+). Its pathway is protein modification; protein glycosylation. Its function is as follows. Transfers mannosyl residues to the hydroxyl group of serine or threonine residues. Coexpression of both POMT1 and POMT2 is necessary for enzyme activity, expression of either POMT1 or POMT2 alone is insufficient. This is Protein O-mannosyl-transferase 1 from Danio rerio (Zebrafish).